Consider the following 613-residue polypeptide: Phosphomethylpyrimidine synthase (613 aa).

Substrate is bound by residues N215, M244, Y273, H309, S329–G331, D370–R373, and E409. Zn(2+) is bound at residue H413. Y436 contributes to the substrate binding site. H477 provides a ligand contact to Zn(2+). C557, C560, and C565 together coordinate [4Fe-4S] cluster.

This sequence belongs to the ThiC family. Homodimer. [4Fe-4S] cluster is required as a cofactor.

It carries out the reaction 5-amino-1-(5-phospho-beta-D-ribosyl)imidazole + S-adenosyl-L-methionine = 4-amino-2-methyl-5-(phosphooxymethyl)pyrimidine + CO + 5'-deoxyadenosine + formate + L-methionine + 3 H(+). The protein operates within cofactor biosynthesis; thiamine diphosphate biosynthesis. Functionally, catalyzes the synthesis of the hydroxymethylpyrimidine phosphate (HMP-P) moiety of thiamine from aminoimidazole ribotide (AIR) in a radical S-adenosyl-L-methionine (SAM)-dependent reaction. In Paramagnetospirillum magneticum (strain ATCC 700264 / AMB-1) (Magnetospirillum magneticum), this protein is Phosphomethylpyrimidine synthase.